Consider the following 220-residue polypeptide: MFSEHLPSSSSQVFQEHFIDSFVSRKLLQQIPFAHNAQQAHVPDKNNLSGNVLMLLSILLCGIICSLGLHYIIRCAFIRSRSFMISDPISIPSTPRDSSVNKGIKKKALKMLPVVNYSPEINLPGVGEECVICLSDFVAGEQLRVLPKCNHGFHLRCIDKWLTQHMTCPKCRHCLVDTCQKVLSDCDAADQVAATATESIDIRISPLEPEARVATFRESS.

Residues 53–73 (LMLLSILLCGIICSLGLHYII) traverse the membrane as a helical segment. Residues 130 to 172 (CVICLSDFVAGEQLRVLPKCNHGFHLRCIDKWLTQHMTCPKCR) form an RING-type; atypical zinc finger.

The protein belongs to the RING-type zinc finger family. ATL subfamily.

It localises to the membrane. It carries out the reaction S-ubiquitinyl-[E2 ubiquitin-conjugating enzyme]-L-cysteine + [acceptor protein]-L-lysine = [E2 ubiquitin-conjugating enzyme]-L-cysteine + N(6)-ubiquitinyl-[acceptor protein]-L-lysine.. It functions in the pathway protein modification; protein ubiquitination. The polypeptide is RING-H2 finger protein ATL77 (ATL77) (Arabidopsis thaliana (Mouse-ear cress)).